The primary structure comprises 417 residues: Chaperone SurA (417 aa).

The N-terminal stretch at 1 to 12 (MGAALLCSFAHA) is a signal peptide. PpiC domains are found at residues 163 to 264 (SEEY…KLEE) and 273 to 372 (RDEV…QVLG).

It is found in the periplasm. It carries out the reaction [protein]-peptidylproline (omega=180) = [protein]-peptidylproline (omega=0). Its function is as follows. Chaperone involved in the correct folding and assembly of outer membrane proteins. Recognizes specific patterns of aromatic residues and the orientation of their side chains, which are found more frequently in integral outer membrane proteins. May act in both early periplasmic and late outer membrane-associated steps of protein maturation. The protein is Chaperone SurA of Pseudomonas aeruginosa (strain ATCC 15692 / DSM 22644 / CIP 104116 / JCM 14847 / LMG 12228 / 1C / PRS 101 / PAO1).